We begin with the raw amino-acid sequence, 367 residues long: Flagellin 2 (367 aa).

The protein belongs to the bacterial flagellin family.

The protein localises to the secreted. It is found in the bacterial flagellum. Flagellin is the subunit protein which polymerizes to form the filaments of bacterial flagella. This Proteus mirabilis protein is Flagellin 2 (fliC2).